Reading from the N-terminus, the 65-residue chain is MKIAEIRELSTKELLERVDAEVAAYDQKKINHSISPMDNPSQIKQQRRLIARMKTELRQRELNNK.

This sequence belongs to the universal ribosomal protein uL29 family.

The protein is Large ribosomal subunit protein uL29 of Parabacteroides distasonis (strain ATCC 8503 / DSM 20701 / CIP 104284 / JCM 5825 / NCTC 11152).